We begin with the raw amino-acid sequence, 102 residues long: MAALNGLVLLLLTISAMFISECYSSGESQSIQRNGRCEEVTCQRKPNHLGVAVTSGCPPGCLCVIQAPDNAVNANGTRYELMTTTTTKTTTTSGTPSSEDPE.

An N-terminal signal peptide occupies residues 1–24 (MAALNGLVLLLLTISAMFISECYS). Disulfide bonds link Cys37-Cys61 and Cys42-Cys63.

The protein belongs to the RaCI family. As to expression, expressed in salivary glands.

Its subcellular location is the secreted. Complement inhibitor. Prevents complement-mediated C5 activation by binding to C5. Binds C5 at a different binding site than the other tick complement inhibitors OmCI and CirpT1, and the drug eculizumab. In Dermacentor andersoni (Rocky mountain wood tick), this protein is Complement inhibitor RaCI6.